The primary structure comprises 177 residues: Protein-export protein SecB (177 aa).

The protein belongs to the SecB family. In terms of assembly, homotetramer, a dimer of dimers. One homotetramer interacts with 1 SecA dimer.

The protein localises to the cytoplasm. Its function is as follows. One of the proteins required for the normal export of preproteins out of the cell cytoplasm. It is a molecular chaperone that binds to a subset of precursor proteins, maintaining them in a translocation-competent state. It also specifically binds to its receptor SecA. This Ehrlichia canis (strain Jake) protein is Protein-export protein SecB.